The sequence spans 640 residues: Threonine--tRNA ligase (640 aa).

The TGS domain occupies 1–61 (MPIITLPDGS…TNDAEIQIIT (61 aa)). Positions 242-533 (DHRKLGKKLS…LIENYSGNLP (292 aa)) are catalytic. Cysteine 333, histidine 384, and histidine 510 together coordinate Zn(2+).

The protein belongs to the class-II aminoacyl-tRNA synthetase family. In terms of assembly, homodimer. Zn(2+) is required as a cofactor.

It localises to the cytoplasm. It carries out the reaction tRNA(Thr) + L-threonine + ATP = L-threonyl-tRNA(Thr) + AMP + diphosphate + H(+). Functionally, catalyzes the attachment of threonine to tRNA(Thr) in a two-step reaction: L-threonine is first activated by ATP to form Thr-AMP and then transferred to the acceptor end of tRNA(Thr). Also edits incorrectly charged L-seryl-tRNA(Thr). In Prochlorococcus marinus (strain NATL1A), this protein is Threonine--tRNA ligase.